A 190-amino-acid polypeptide reads, in one-letter code: Protein GrpE (190 aa).

The segment covering 1–18 (MTETPNTSSEEIQTSEPS) has biased composition (polar residues). The segment at 1 to 21 (MTETPNTSSEEIQTSEPSPDN) is disordered.

It belongs to the GrpE family. In terms of assembly, homodimer.

It is found in the cytoplasm. Functionally, participates actively in the response to hyperosmotic and heat shock by preventing the aggregation of stress-denatured proteins, in association with DnaK and GrpE. It is the nucleotide exchange factor for DnaK and may function as a thermosensor. Unfolded proteins bind initially to DnaJ; upon interaction with the DnaJ-bound protein, DnaK hydrolyzes its bound ATP, resulting in the formation of a stable complex. GrpE releases ADP from DnaK; ATP binding to DnaK triggers the release of the substrate protein, thus completing the reaction cycle. Several rounds of ATP-dependent interactions between DnaJ, DnaK and GrpE are required for fully efficient folding. The protein is Protein GrpE of Chlamydia trachomatis serovar L2b (strain UCH-1/proctitis).